A 1407-amino-acid chain; its full sequence is MKDLLKFLKAQTKTEEFDAIKIALASPDMIRSWSFGEVKKPETINYRTFKPERDGLFCARIFGPVKDYECLCGKYKRLKHRGVICEKCGVEVTQTKVRRERMGHIELASPTAHIWFLKSLPSRIGLLLDMPLRDIERVLYFESYVVIEGGMTNLERQQILTEEQYLDALEEFGDEFDAKMGAEAIQALLKSMDLEQECEQLREELNETNSETKRKKLTKRIKLLEAFVQSGNKPEWMILTVLPVLPPDLRPLVPLDGGRFATSDLNDLYRRVINRNNRLKRLLDLAAPDIIVRNEKRMLQEAVDALLDNGRRGRAITGSNKRPLKSLADMIKGKQGRFRQNLLGKRVDYSGRSVITVGPYLRLHQCGLPKKMALELFKPFIYGKLELRGLATTIKAAKKMVEREXAVVWDILDEVIREHPVLLNRAPTLHRLGIQAFEPVLIEGKAIQLHPLVCAAYNADFDGDQMAVHVPLTLEAQLEARALMMSTNNILSPANGEPIIVPSQDVVLGLYYMTRDCVNAKGEGMVLTGPKEAERLYRSGLASLHARVKVRITEYEKDANGELXAKTSLXDTTVGRAILWMIVPKGLPYTIVNQALGKKAISKMLNTCYRILGLKPTVIFADQIMYTGFAYAARSGASVGIDDMVIPEKKHEIISEAEAEVAEIQEQFQSGLVTAGERYNKVIDIWAAANDRVSKAMMDNLQTETVINRDGQEEKQVSFNSIYMMADSGARGSAAQIRQLAGMRGLMAKPDGSIIETPITANFREGLNVLQYFISTHGARKGLADTALKTANSGYLTRRLVDVAQDLVVTEDDCGTHEGIMMTPVIEGGDVKEPLRDRVLGRVTAEDVLKPGTADILVPRNTLLHEQWCDLLEENSVDAVKVRSVVSCDTDFGVCAHCYGRDLARGHIINKGEAIGVIAAQSIGEPGTQLTMRTFHIGGAASRAAAESSIQVKNKGSIKLSNVKSVVNSSGKLVITSRNTELKLIDEFGRTKESYKVPYGAVLAKGDGEQVAGGETVANWDPHTMPVITEVSGFVRFTDMIDGQTITRQTDELTGLSSLVVLDSAERTAGGKDLRPALKIVDAQGNDVLIPGTDMPAQYFLPGKAIVQLEDGVQISSGDTLARIPQESGGTKDITGGLPRVADLFEARRPKEPAILAEISGIVSFGKETKGKRRLVITPVDGSDPYEEMIPKWRQLNVFEGERVERGDVISDGPEAPHDILRLRGVHAVTRYIVNEVQDVYRLQGVKINDKHIEVIVRQMLRKATIVNAGSSDFLEGEQVEYSRVKIANRELEANGKVGATYSRDLLGITKASLATESFISAASFQETTRVLTEAAVAGKRDELRGLKENVIVGRLIPAGTGYAYHQDRMRRRAAGEAPAAPQVTAEDASASLAELLNAGLGGSDNE.

Cys70, Cys72, Cys85, and Cys88 together coordinate Zn(2+). The Mg(2+) site is built by Asp460, Asp462, and Asp464. Positions 814, 888, 895, and 898 each coordinate Zn(2+). Lys972 is subject to N6-acetyllysine.

It belongs to the RNA polymerase beta' chain family. The RNAP catalytic core consists of 2 alpha, 1 beta, 1 beta' and 1 omega subunit. When a sigma factor is associated with the core the holoenzyme is formed, which can initiate transcription. Mg(2+) is required as a cofactor. Zn(2+) serves as cofactor.

It carries out the reaction RNA(n) + a ribonucleoside 5'-triphosphate = RNA(n+1) + diphosphate. Functionally, DNA-dependent RNA polymerase catalyzes the transcription of DNA into RNA using the four ribonucleoside triphosphates as substrates. This Escherichia coli O6:H1 (strain CFT073 / ATCC 700928 / UPEC) protein is DNA-directed RNA polymerase subunit beta'.